Consider the following 316-residue polypeptide: Adenine deaminase (316 aa).

Positions 14, 16, and 194 each coordinate Zn(2+). The active-site Proton donor is E197. D275 lines the Zn(2+) pocket. D276 provides a ligand contact to substrate.

This sequence belongs to the metallo-dependent hydrolases superfamily. Adenosine and AMP deaminases family. Adenine deaminase type 2 subfamily. Requires Zn(2+) as cofactor.

It carries out the reaction adenine + H2O + H(+) = hypoxanthine + NH4(+). Its function is as follows. Catalyzes the hydrolytic deamination of adenine to hypoxanthine. Plays an important role in the purine salvage pathway and in nitrogen catabolism. This Bordetella avium (strain 197N) protein is Adenine deaminase.